The primary structure comprises 96 residues: Aspartyl/glutamyl-tRNA(Asn/Gln) amidotransferase subunit C (96 aa).

This sequence belongs to the GatC family. As to quaternary structure, heterotrimer of A, B and C subunits.

The enzyme catalyses L-glutamyl-tRNA(Gln) + L-glutamine + ATP + H2O = L-glutaminyl-tRNA(Gln) + L-glutamate + ADP + phosphate + H(+). It catalyses the reaction L-aspartyl-tRNA(Asn) + L-glutamine + ATP + H2O = L-asparaginyl-tRNA(Asn) + L-glutamate + ADP + phosphate + 2 H(+). Allows the formation of correctly charged Asn-tRNA(Asn) or Gln-tRNA(Gln) through the transamidation of misacylated Asp-tRNA(Asn) or Glu-tRNA(Gln) in organisms which lack either or both of asparaginyl-tRNA or glutaminyl-tRNA synthetases. The reaction takes place in the presence of glutamine and ATP through an activated phospho-Asp-tRNA(Asn) or phospho-Glu-tRNA(Gln). This chain is Aspartyl/glutamyl-tRNA(Asn/Gln) amidotransferase subunit C, found in Sulfurovum sp. (strain NBC37-1).